We begin with the raw amino-acid sequence, 206 residues long: MYEDLNGKQLEILNYMKMEINKRGYPPSVREICEAVGLRSTSTVHGHLAKLEDKGYIRRDPTKPRAIEILSNDPFSDYSHNKEMVQVPIVGKVTAGQPILATENIEDTFPLPLNFIDHGNTFILNVKGESMIEAGILDNDYVVIRQQSTASNGDIVVALIDDEATVKRFFKESDHIRLQPENSLMDPILLKDVVILGKVIGVFRKL.

The segment at residues 29 to 49 (VREICEAVGLRSTSTVHGHLA) is a DNA-binding region (H-T-H motif). Active-site for autocatalytic cleavage activity residues include Ser130 and Lys167.

The protein belongs to the peptidase S24 family. In terms of assembly, homodimer.

The enzyme catalyses Hydrolysis of Ala-|-Gly bond in repressor LexA.. Its function is as follows. Represses a number of genes involved in the response to DNA damage (SOS response), including recA and lexA. In the presence of single-stranded DNA, RecA interacts with LexA causing an autocatalytic cleavage which disrupts the DNA-binding part of LexA, leading to derepression of the SOS regulon and eventually DNA repair. This chain is LexA repressor, found in Alkaliphilus oremlandii (strain OhILAs) (Clostridium oremlandii (strain OhILAs)).